We begin with the raw amino-acid sequence, 509 residues long: CDK5RAP3 protein homolog (509 aa).

It belongs to the CDK5RAP3 family.

It localises to the nucleus. Its subcellular location is the cytoplasm. Its function is as follows. Substrate adapter of E3 ligase complexes mediating ufmylation, the covalent attachment of the ubiquitin-like modifier UFM1 to substrate proteins, and which is involved in various processes, such as ribosome recycling and reticulophagy (also called ER-phagy). The sequence is that of CDK5RAP3 protein homolog from Drosophila melanogaster (Fruit fly).